The following is a 916-amino-acid chain: RNA-directed DNA polymerase from mobile element jockey (916 aa).

A Reverse transcriptase domain is found at 483–757; that stretch reads SILRVGYFPK…HEYKYLGVIL (275 aa). A disordered region spans residues 890–916; it reads RSASPRSRVRRRLKRHHPQDLLDRALT. The segment covering 896-906 has biased composition (basic residues); sequence SRVRRRLKRHH. The span at 907 to 916 shows a compositional bias: basic and acidic residues; sequence PQDLLDRALT.

Mg(2+) serves as cofactor. It depends on Mn(2+) as a cofactor.

It catalyses the reaction DNA(n) + a 2'-deoxyribonucleoside 5'-triphosphate = DNA(n+1) + diphosphate. Its activity is regulated as follows. Inactivated by sulphydryl reagent. This chain is RNA-directed DNA polymerase from mobile element jockey (jockey\pol), found in Drosophila funebris (Fruit fly).